The primary structure comprises 208 residues: Uracil phosphoribosyltransferase (208 aa).

Residues R78, R103, and 130 to 138 each bind 5-phospho-alpha-D-ribose 1-diphosphate; that span reads DPMLATGGS. Uracil contacts are provided by residues I193 and 198 to 200; that span reads GDA. D199 is a 5-phospho-alpha-D-ribose 1-diphosphate binding site.

The protein belongs to the UPRTase family. Mg(2+) serves as cofactor.

It catalyses the reaction UMP + diphosphate = 5-phospho-alpha-D-ribose 1-diphosphate + uracil. The protein operates within pyrimidine metabolism; UMP biosynthesis via salvage pathway; UMP from uracil: step 1/1. Its activity is regulated as follows. Allosterically activated by GTP. Its function is as follows. Catalyzes the conversion of uracil and 5-phospho-alpha-D-ribose 1-diphosphate (PRPP) to UMP and diphosphate. The chain is Uracil phosphoribosyltransferase from Yersinia pestis.